The sequence spans 864 residues: MDVSLCPAKCSFWRIFLLGSVWLDYVGSVLACPANCVCSKTEINCRRPDDGNLFPLLEGQDSGNSNGNASINITDISRNITSIHIENWRGLHTLNAVDMELYTGLQKLTIKNSGLRNIQPRAFAKNPHLRYINLSSNRLTTLSWQLFQTLSLRELRLEQNFFNCSCDIRWMQLWQEQGEARLDSQSLYCISADGSQLPLFRMNISQCDLPEISVSHVNLTVREGDNAVITCNGSGSPLPDVDWIVTGLQSINTHQTNLNWTNVHAINLTLVNVTSEDNGFTLTCIAENVVGMSNASVALTVYYPPRVVSLVEPEVRLEHCIEFVVRGNPTPTLHWLYNGQPLRESKIIHMDYYQEGEVSEGCLLFNKPTHYNNGNYTLIAKNALGTANQTINGHFLKEPFPESTDFFDFESDASPTPPITVTHKPEEDTFGVSIAVGLAAFACVLLVVLFIMINKYGRRSKFGMKGPVAVISGEEDSASPLHHINHGITTPSSLDAGPDTVVIGMTRIPVIENPQYFRQGHNCHKPDTYVQHIKRRDIVLKRELGEGAFGKVFLAECYNLSPTKDKMLVAVKALKDPTLAARKDFQREAELLTNLQHEHIVKFYGVCGDGDPLIMVFEYMKHGDLNKFLRAHGPDAMILVDGQPRQAKGELGLSQMLHIASQIASGMVYLASQHFVHRDLATRNCLVGANLLVKIGDFGMSRDVYSTDYYREGPYQKGPFSVSWQQQRLAASAASTLFNPSGNDFCIWCEVGGHTMLPIRWMPPESIMYRKFTTESDVWSFGVILWEIFTYGKQPWFQLSNTEVIECITQGRVLERPRVCPKEVYDVMLGCWQREPQQRLNIKEIYKILHALGKATPIYLDILG.

Residues 1–31 form the signal peptide; sequence MDVSLCPAKCSFWRIFLLGSVWLDYVGSVLA. 2 cysteine pairs are disulfide-bonded: cysteine 32-cysteine 38 and cysteine 36-cysteine 45. At 32-429 the chain is on the extracellular side; sequence CPANCVCSKT…TVTHKPEEDT (398 aa). Asparagine 68, asparagine 72, and asparagine 79 each carry an N-linked (GlcNAc...) asparagine glycan. LRR repeat units follow at residues 104–125 and 128–149; these read GLQKLTIKNSGLRNIQPRAFAK and HLRYINLSSNRLTTLSWQLFQT. Asparagine 133 and asparagine 163 each carry an N-linked (GlcNAc...) asparagine glycan. The LRRCT domain occupies 160–209; sequence NFFNCSCDIRWMQLWQEQGEARLDSQSLYCISADGSQLPLFRMNISQCDL. Disulfide bonds link cysteine 164-cysteine 189 and cysteine 166-cysteine 207. Residues asparagine 203, asparagine 218, asparagine 232, asparagine 259, asparagine 267, asparagine 272, and asparagine 294 are each glycosylated (N-linked (GlcNAc...) asparagine). Ig-like C2-type domains lie at 210 to 300 and 309 to 382; these read PEIS…VALT and SLVE…IAKN. An intrachain disulfide couples cysteine 231 to cysteine 284. An intrachain disulfide couples cysteine 320 to cysteine 362. 2 N-linked (GlcNAc...) asparagine glycosylation sites follow: asparagine 375 and asparagine 388. Residues 430–453 traverse the membrane as a helical segment; sequence FGVSIAVGLAAFACVLLVVLFIMI. Residues 454-864 are Cytoplasmic-facing; it reads NKYGRRSKFG…ATPIYLDILG (411 aa). Serine 493 is modified (phosphoserine). Tyrosine 516 is subject to Phosphotyrosine; by autocatalysis. Positions 538–853 constitute a Protein kinase domain; that stretch reads IVLKRELGEG…EIYKILHALG (316 aa). Residues 544–552 and lysine 572 contribute to the ATP site; that span reads LGEGAFGKV. Aspartate 679 serves as the catalytic Proton acceptor. Tyrosine 705, tyrosine 709, tyrosine 710, and tyrosine 859 each carry phosphotyrosine; by autocatalysis.

The protein belongs to the protein kinase superfamily. Tyr protein kinase family. Insulin receptor subfamily. Exists in a dynamic equilibrium between monomeric (low affinity) and dimeric (high affinity) structures. Binds SH2B2. Interacts with SQSTM1 and KIDINS220. Interacts with PTPRS. Interacts with MAPK8IP3/JIP3. Post-translationally, ligand-mediated auto-phosphorylation. Widely expressed, mainly in the nervous tissue.

It localises to the membrane. The catalysed reaction is L-tyrosyl-[protein] + ATP = O-phospho-L-tyrosyl-[protein] + ADP + H(+). Its function is as follows. Receptor tyrosine kinase involved in nervous system and probably heart development. Upon binding of its ligand NTF3/neurotrophin-3, NTRK3 autophosphorylates and activates different signaling pathways, including the phosphatidylinositol 3-kinase/AKT and the MAPK pathways, that control cell survival and differentiation. NTRK3 isoforms containing insertions within the kinase domain can autophosphorylate in response to NTF3/neurotrophin-3, but cannot mediate downstream phenotypic responses. The chain is NT-3 growth factor receptor (Ntrk3) from Rattus norvegicus (Rat).